Consider the following 568-residue polypeptide: 2-succinyl-5-enolpyruvyl-6-hydroxy-3-cyclohexene-1-carboxylate synthase (568 aa).

The protein belongs to the TPP enzyme family. MenD subfamily. In terms of assembly, homodimer. Mg(2+) serves as cofactor. The cofactor is Mn(2+). It depends on thiamine diphosphate as a cofactor.

It catalyses the reaction isochorismate + 2-oxoglutarate + H(+) = 5-enolpyruvoyl-6-hydroxy-2-succinyl-cyclohex-3-ene-1-carboxylate + CO2. The protein operates within quinol/quinone metabolism; 1,4-dihydroxy-2-naphthoate biosynthesis; 1,4-dihydroxy-2-naphthoate from chorismate: step 2/7. It participates in quinol/quinone metabolism; menaquinone biosynthesis. In terms of biological role, catalyzes the thiamine diphosphate-dependent decarboxylation of 2-oxoglutarate and the subsequent addition of the resulting succinic semialdehyde-thiamine pyrophosphate anion to isochorismate to yield 2-succinyl-5-enolpyruvyl-6-hydroxy-3-cyclohexene-1-carboxylate (SEPHCHC). The sequence is that of 2-succinyl-5-enolpyruvyl-6-hydroxy-3-cyclohexene-1-carboxylate synthase from Actinobacillus pleuropneumoniae serotype 5b (strain L20).